Here is a 457-residue protein sequence, read N- to C-terminus: Cysteine--tRNA ligase (457 aa).

Position 28 (Cys-28) interacts with Zn(2+). A 'HIGH' region motif is present at residues 30 to 40 (PTVYDTAHIGN). Residues Cys-212, His-237, and Glu-241 each contribute to the Zn(2+) site. The short motif at 270–274 (KMSKS) is the 'KMSKS' region element. Lys-273 contributes to the ATP binding site.

It belongs to the class-I aminoacyl-tRNA synthetase family. Monomer. Requires Zn(2+) as cofactor.

Its subcellular location is the cytoplasm. The catalysed reaction is tRNA(Cys) + L-cysteine + ATP = L-cysteinyl-tRNA(Cys) + AMP + diphosphate. The polypeptide is Cysteine--tRNA ligase (Wolbachia sp. subsp. Drosophila simulans (strain wRi)).